We begin with the raw amino-acid sequence, 294 residues long: Cytidine deaminase (294 aa).

2 consecutive CMP/dCMP-type deaminase domains span residues 48 to 168 (DEDA…FGPK) and 186 to 294 (LTGD…VLLG). A substrate-binding site is contributed by 89-91 (NME). His102 is a binding site for Zn(2+). Glu104 acts as the Proton donor in catalysis. Zn(2+) is bound by residues Cys129 and Cys132.

The protein belongs to the cytidine and deoxycytidylate deaminase family. Homodimer. Zn(2+) serves as cofactor.

It catalyses the reaction cytidine + H2O + H(+) = uridine + NH4(+). The enzyme catalyses 2'-deoxycytidine + H2O + H(+) = 2'-deoxyuridine + NH4(+). In terms of biological role, this enzyme scavenges exogenous and endogenous cytidine and 2'-deoxycytidine for UMP synthesis. This chain is Cytidine deaminase, found in Salmonella dublin (strain CT_02021853).